A 462-amino-acid chain; its full sequence is A-type ATP synthase subunit B (462 aa).

This sequence belongs to the ATPase alpha/beta chains family. As to quaternary structure, has multiple subunits with at least A(3), B(3), C, D, E, F, H, I and proteolipid K(x).

Its subcellular location is the cell membrane. Component of the A-type ATP synthase that produces ATP from ADP in the presence of a proton gradient across the membrane. The B chain is a regulatory subunit. The sequence is that of A-type ATP synthase subunit B from Methanobrevibacter smithii (strain ATCC 35061 / DSM 861 / OCM 144 / PS).